Consider the following 424-residue polypeptide: Enolase (424 aa).

Gln-162 lines the (2R)-2-phosphoglycerate pocket. The active-site Proton donor is Glu-204. Mg(2+) contacts are provided by Asp-241, Glu-284, and Asp-311. Residues Lys-336, Arg-365, Ser-366, and Lys-387 each coordinate (2R)-2-phosphoglycerate. Residue Lys-336 is the Proton acceptor of the active site.

Belongs to the enolase family. Mg(2+) is required as a cofactor.

It localises to the cytoplasm. Its subcellular location is the secreted. The protein resides in the cell surface. The enzyme catalyses (2R)-2-phosphoglycerate = phosphoenolpyruvate + H2O. Its pathway is carbohydrate degradation; glycolysis; pyruvate from D-glyceraldehyde 3-phosphate: step 4/5. Functionally, catalyzes the reversible conversion of 2-phosphoglycerate (2-PG) into phosphoenolpyruvate (PEP). It is essential for the degradation of carbohydrates via glycolysis. The chain is Enolase from Rhizobium meliloti (strain 1021) (Ensifer meliloti).